A 300-amino-acid chain; its full sequence is Inosose dehydratase (300 aa).

The protein belongs to the IolE/MocC family. Glutathione serves as cofactor. Requires Co(2+) as cofactor. The cofactor is Mn(2+).

It catalyses the reaction scyllo-inosose = 3D-3,5/4-trihydroxycyclohexane-1,2-dione + H2O. It functions in the pathway polyol metabolism; myo-inositol degradation into acetyl-CoA; acetyl-CoA from myo-inositol: step 2/7. In terms of biological role, catalyzes the dehydration of inosose (2-keto-myo-inositol, 2KMI or 2,4,6/3,5-pentahydroxycyclohexanone) to 3D-(3,5/4)-trihydroxycyclohexane-1,2-dione (D-2,3-diketo-4-deoxy-epi-inositol). In Lactiplantibacillus plantarum (strain ATCC BAA-793 / NCIMB 8826 / WCFS1) (Lactobacillus plantarum), this protein is Inosose dehydratase.